Here is a 259-residue protein sequence, read N- to C-terminus: DNA repair protein RecO (259 aa).

The protein belongs to the RecO family.

Its function is as follows. Involved in DNA repair and RecF pathway recombination. The polypeptide is DNA repair protein RecO (Leuconostoc mesenteroides subsp. mesenteroides (strain ATCC 8293 / DSM 20343 / BCRC 11652 / CCM 1803 / JCM 6124 / NCDO 523 / NBRC 100496 / NCIMB 8023 / NCTC 12954 / NRRL B-1118 / 37Y)).